Reading from the N-terminus, the 152-residue chain is Methylglyoxal synthase (152 aa).

In terms of domain architecture, MGS-like spans 6–152 (RTMATAKNIA…YQHYLNGRLK (147 aa)). Residues histidine 19, lysine 23, 45–48 (TGTT), and 65–66 (SG) each bind substrate. Residue aspartate 71 is the Proton donor/acceptor of the active site. Histidine 98 is a binding site for substrate.

This sequence belongs to the methylglyoxal synthase family.

The enzyme catalyses dihydroxyacetone phosphate = methylglyoxal + phosphate. In terms of biological role, catalyzes the formation of methylglyoxal from dihydroxyacetone phosphate. The sequence is that of Methylglyoxal synthase from Photorhabdus laumondii subsp. laumondii (strain DSM 15139 / CIP 105565 / TT01) (Photorhabdus luminescens subsp. laumondii).